Here is a 397-residue protein sequence, read N- to C-terminus: Phosphoglycerate kinase (397 aa).

Residues D21 to N23, R36, H59 to R62, R118, and R151 each bind substrate. Residues K201, E323, and G353–T356 each bind ATP.

Belongs to the phosphoglycerate kinase family. Monomer.

It localises to the cytoplasm. It carries out the reaction (2R)-3-phosphoglycerate + ATP = (2R)-3-phospho-glyceroyl phosphate + ADP. The protein operates within carbohydrate degradation; glycolysis; pyruvate from D-glyceraldehyde 3-phosphate: step 2/5. The protein is Phosphoglycerate kinase of Bartonella tribocorum (strain CIP 105476 / IBS 506).